Consider the following 333-residue polypeptide: MPIVNGFKVGPIGLGLMGLTWRPKQTPIKQAFELMNYALSQGSNYWNAGEFYGINPPTANLDLLADYFEKYPKNADKVFLSVKGGTDFKTLAPHGDPESVTKSVKNALTRLRGKKKLDLFQCARVDHKVPIETTMKALKAFVDSGEISCVGLSEASAESIKRALAIVPIAAVETEYSLFSRDIEKNGILDTCTQLSIPIIAYAPFCHGLLTGRVKTAEDLKDFIKAFPFLRNMDKFNPKVFEKNIPFLKAVEQLAQKFGMSMPEFALNFIIANGKGMIIPIPGSTTVQRAESNLSALKKSLSSEQLEEAKKVLDKHQIFGLRYNKQLESTLSI.

Tyr52 functions as the Proton donor in the catalytic mechanism.

It belongs to the aldo/keto reductase family.

Its subcellular location is the cytoplasm. The catalysed reaction is pyridoxine + NADP(+) = pyridoxal + NADPH + H(+). Its function is as follows. Catalyzes the reduction of pyridoxal (PL) with NADPH and oxidation of pyridoxine (PN) with NADP(+). The chain is Probable pyridoxal reductase 2 from Schizosaccharomyces pombe (strain 972 / ATCC 24843) (Fission yeast).